The following is a 335-amino-acid chain: Ketol-acid reductoisomerase (NAD(P)(+)) (335 aa).

The 181-residue stretch at 2–182 folds into the KARI N-terminal Rossmann domain; that stretch reads AKIYKDEDIS…GCARAGVIES (181 aa). NADP(+) contacts are provided by residues 25–28, Arg49, Ser53, and 83–86; these read YGSQ and DMVQ. Residue His108 is part of the active site. Residue Gly134 coordinates NADP(+). In terms of domain architecture, KARI C-terminal knotted spans 183–328; that stretch reads TFKEETETDL…RKLREMMFRG (146 aa). Positions 191, 195, 227, and 231 each coordinate Mg(2+). Ser252 contacts substrate.

It belongs to the ketol-acid reductoisomerase family. As to quaternary structure, homodimer. Requires Mg(2+) as cofactor.

The catalysed reaction is (2R)-2,3-dihydroxy-3-methylbutanoate + NAD(+) = (2S)-2-acetolactate + NADH + H(+). It catalyses the reaction (2R)-2,3-dihydroxy-3-methylbutanoate + NADP(+) = (2S)-2-acetolactate + NADPH + H(+). Its pathway is amino-acid biosynthesis; L-isoleucine biosynthesis; L-isoleucine from 2-oxobutanoate: step 2/4. It functions in the pathway amino-acid biosynthesis; L-valine biosynthesis; L-valine from pyruvate: step 2/4. Its function is as follows. Involved in the biosynthesis of branched-chain amino acids (BCAA). Catalyzes an alkyl-migration followed by a ketol-acid reduction of (S)-2-acetolactate (S2AL) to yield (R)-2,3-dihydroxy-isovalerate. In the isomerase reaction, S2AL is rearranged via a Mg-dependent methyl migration to produce 3-hydroxy-3-methyl-2-ketobutyrate (HMKB). In the reductase reaction, this 2-ketoacid undergoes a metal-dependent reduction by NADPH or NADH to yield (R)-2,3-dihydroxy-isovalerate. The polypeptide is Ketol-acid reductoisomerase (NAD(P)(+)) (Ignisphaera aggregans (strain DSM 17230 / JCM 13409 / AQ1.S1)).